The chain runs to 338 residues: Ketol-acid reductoisomerase (NADP(+)) (338 aa).

The KARI N-terminal Rossmann domain maps to 1–181 (MNVYYDKDCD…GGGRSGIIET (181 aa)). Residues 24 to 27 (YGSQ), R47, S50, S52, and 82 to 85 (DEFQ) each bind NADP(+). H107 is a catalytic residue. G133 provides a ligand contact to NADP(+). Residues 182-327 (TFKDETETDL…AKLRGMMPWI (146 aa)) form the KARI C-terminal knotted domain. Mg(2+) is bound by residues D190, E194, E226, and E230. Residue S251 coordinates substrate.

The protein belongs to the ketol-acid reductoisomerase family. Mg(2+) serves as cofactor.

It catalyses the reaction (2R)-2,3-dihydroxy-3-methylbutanoate + NADP(+) = (2S)-2-acetolactate + NADPH + H(+). It carries out the reaction (2R,3R)-2,3-dihydroxy-3-methylpentanoate + NADP(+) = (S)-2-ethyl-2-hydroxy-3-oxobutanoate + NADPH + H(+). It functions in the pathway amino-acid biosynthesis; L-isoleucine biosynthesis; L-isoleucine from 2-oxobutanoate: step 2/4. Its pathway is amino-acid biosynthesis; L-valine biosynthesis; L-valine from pyruvate: step 2/4. Its function is as follows. Involved in the biosynthesis of branched-chain amino acids (BCAA). Catalyzes an alkyl-migration followed by a ketol-acid reduction of (S)-2-acetolactate (S2AL) to yield (R)-2,3-dihydroxy-isovalerate. In the isomerase reaction, S2AL is rearranged via a Mg-dependent methyl migration to produce 3-hydroxy-3-methyl-2-ketobutyrate (HMKB). In the reductase reaction, this 2-ketoacid undergoes a metal-dependent reduction by NADPH to yield (R)-2,3-dihydroxy-isovalerate. This is Ketol-acid reductoisomerase (NADP(+)) from Psychrobacter arcticus (strain DSM 17307 / VKM B-2377 / 273-4).